Consider the following 424-residue polypeptide: MSGPQRTGTGGGSRRAVVTGLGVLSPHGTGVEAHWKAVADGTSSLGPVTREGCAHLPLRVAGEVHGFDAAETVEDRFLVQTDRFTHFALSATQHALADARFGRADVDSPYSVGVVTAAGSGGGEFGQRELQNLWGHGSRHVGPYQSIAWFYAASTGQVSIRNDFKGPCGVVAADEAGGLDALAHAALAVRNGTDTVVCGATEAPLAPYSIVCQLGYPELSRATEPDRAYRPFTEAACGFAPAEGGAVLVVEEEAAARERGADVRATVAGHAATFTGAGRWAESREGLARAIQGALAEAGCRPEEVDVVFADALGVPEADRAEALALADALGPHAARVPVTAPKTGTGRAYCAAPVLDVATAVLAMEHGLIPPTPHVLDVCHDLDLVTGRARPAEPRTALVLARGLMGSNSALVLRRGAVPPEGR.

The Ketosynthase family 3 (KS3) domain occupies 13–416; the sequence is SRRAVVTGLG…GSNSALVLRR (404 aa).

Belongs to the thiolase-like superfamily. Beta-ketoacyl-ACP synthases family.

In terms of biological role, involved in developmentally regulated synthesis of a compound biosynthetically related to polyketide antibiotics which is essential for spore color in Streptomyces coelicolor. This Streptomyces coelicolor (strain ATCC BAA-471 / A3(2) / M145) protein is Putative polyketide beta-ketoacyl synthase 2.